A 129-amino-acid polypeptide reads, in one-letter code: Small ribosomal subunit protein uS11 (129 aa).

Belongs to the universal ribosomal protein uS11 family. Part of the 30S ribosomal subunit. Interacts with proteins S7 and S18. Binds to IF-3.

Functionally, located on the platform of the 30S subunit, it bridges several disparate RNA helices of the 16S rRNA. Forms part of the Shine-Dalgarno cleft in the 70S ribosome. This chain is Small ribosomal subunit protein uS11, found in Jannaschia sp. (strain CCS1).